Here is a 107-residue protein sequence, read N- to C-terminus: Large ribosomal subunit protein uL24 (107 aa).

The protein belongs to the universal ribosomal protein uL24 family. As to quaternary structure, part of the 50S ribosomal subunit.

One of two assembly initiator proteins, it binds directly to the 5'-end of the 23S rRNA, where it nucleates assembly of the 50S subunit. Its function is as follows. One of the proteins that surrounds the polypeptide exit tunnel on the outside of the subunit. The chain is Large ribosomal subunit protein uL24 from Neisseria meningitidis serogroup C (strain 053442).